We begin with the raw amino-acid sequence, 337 residues long: Ornithine carbamoyltransferase, catabolic (337 aa).

Residues 58 to 61 (STRT), Q85, R109, and 135 to 138 (HPTQ) contribute to the carbamoyl phosphate site. L-ornithine contacts are provided by residues N167, D231, and 235–236 (SM). Residues 272-273 (CL) and R317 each bind carbamoyl phosphate.

This sequence belongs to the aspartate/ornithine carbamoyltransferase superfamily. OTCase family.

The protein localises to the cytoplasm. The catalysed reaction is carbamoyl phosphate + L-ornithine = L-citrulline + phosphate + H(+). It functions in the pathway amino-acid degradation; L-arginine degradation via ADI pathway; carbamoyl phosphate from L-arginine: step 2/2. Functionally, reversibly catalyzes the transfer of the carbamoyl group from carbamoyl phosphate (CP) to the N(epsilon) atom of ornithine (ORN) to produce L-citrulline. The chain is Ornithine carbamoyltransferase, catabolic (arcB) from Latilactobacillus sakei (Lactobacillus sakei).